Consider the following 645-residue polypeptide: Glucans biosynthesis glucosyltransferase H (645 aa).

Residues 1-13 (MDGTVTPSPTTTA) show a composition bias toward polar residues. The segment at 1–32 (MDGTVTPSPTTTAMPPVSALDAGTPTLPPEAP) is disordered. A run of 7 helical transmembrane segments spans residues 64 to 84 (LIGG…SVLW), 98 to 118 (LFVL…AGFV), 423 to 443 (APMW…GGGI), 465 to 485 (AIWI…LGYI), 504 to 524 (AVSI…VMYL), 559 to 579 (YGGL…VSPA), and 580 to 600 (LAAW…VVAL).

Belongs to the glycosyltransferase 2 family. OpgH subfamily.

The protein resides in the cell inner membrane. The protein operates within glycan metabolism; osmoregulated periplasmic glucan (OPG) biosynthesis. Its function is as follows. Involved in the biosynthesis of osmoregulated periplasmic glucans (OPGs). This Xanthomonas euvesicatoria pv. vesicatoria (strain 85-10) (Xanthomonas campestris pv. vesicatoria) protein is Glucans biosynthesis glucosyltransferase H.